Here is a 539-residue protein sequence, read N- to C-terminus: MAAKDVKFGNDARVKMLRGVNVLADAVKVTLGPKGRNVVLDKSFGAPTITKDGVSVAREIELEDKFENMGAQMVKEVASKANDAAGDGTTTATVLAQAIITEGLKAVAAGMNPMDLKRGIDKAVTAAVEELKALSVPCSDSKAIAQVGTISANSDETVGKLIAEAMDKVGKEGVITVEDGTGLEDELDVVEGMQFDRGYLSPYFINKPETGAVELESPFILLADKKISNIREMLPVLEAVAKAGKPLVIIAEDVEGEALATLVVNTMRGIVKVAAVKAPGFGDRRKAMLQDIATLTGGTVISEEIGMELEKATLEDLGQAKRVVINKDTTTIIDGVGEEAAIQGRVGQIRKQIEEATSDYDREKLQERVAKLAGGVAVIKVGAATEVEMKEKKARVDDALHATRAAVEEGVVAGGGVALVRVAAKLAGLTAQNEDQNVGIKVALRAMEAPLRQIVSNAGEEPSVVTNNVKAGEGNYGYNAATEEYGNMIDFGILDPTKVTRSALQYAASVAGLMITTECMVTDLPKGDAPDLXAAGMGG.

Residues 30–33 (TLGP), Lys51, 87–91 (DGTTT), Gly415, 479–481 (NAA), and Asp495 contribute to the ATP site.

Belongs to the chaperonin (HSP60) family. In terms of assembly, forms a cylinder of 14 subunits composed of two heptameric rings stacked back-to-back. Interacts with the co-chaperonin GroES.

It is found in the cytoplasm. It catalyses the reaction ATP + H2O + a folded polypeptide = ADP + phosphate + an unfolded polypeptide.. Together with its co-chaperonin GroES, plays an essential role in assisting protein folding. The GroEL-GroES system forms a nano-cage that allows encapsulation of the non-native substrate proteins and provides a physical environment optimized to promote and accelerate protein folding. The sequence is that of Chaperonin GroEL from Enterobacter asburiae.